The primary structure comprises 209 residues: Lectin (209 aa).

As to quaternary structure, homodimer; non-covalently linked.

Functionally, binds chito-oligosaccherides. Has hemagglutinating activity towards rabbit erythrocytes. This Luffa acutangula (Ridged gourd) protein is Lectin.